A 145-amino-acid polypeptide reads, in one-letter code: MSMPILKKENIVLHARVENKTEAIRLAGQILVNNGYVEDSYIDKMFEREALTSTYMGNFIAIPHGTEDAKQFVKHSGISIIQIPDGVDFGDGNIVKLLIGIAGKNNEHLEILSKIAIVCSEVENVETMIKAATEEEILSILNEVN.

The 141-residue stretch at 4-144 (PILKKENIVL…EEILSILNEV (141 aa)) folds into the PTS EIIA type-2 domain. The Tele-phosphohistidine intermediate role is filled by histidine 64. Residue histidine 64 is modified to Phosphohistidine; by HPr.

The protein localises to the cytoplasm. Its function is as follows. The phosphoenolpyruvate-dependent sugar phosphotransferase system (sugar PTS), a major carbohydrate active transport system, catalyzes the phosphorylation of incoming sugar substrates concomitantly with their translocation across the cell membrane. The enzyme II CmtAB PTS system is involved in D-mannitol transport. This Geobacillus stearothermophilus (Bacillus stearothermophilus) protein is Mannitol-specific phosphotransferase enzyme IIA component.